We begin with the raw amino-acid sequence, 171 residues long: Putative adenylate kinase (171 aa).

ATP is bound by residues G9, G11, K12, T13, and T14. The interval 28 to 51 (SLGELIRQKGFVLGRDPIRGYLEA) is NMP. An LID region spans residues 99–109 (GRGYPEGKVLE). R100 is an ATP binding site.

Belongs to the adenylate kinase family. AK6 subfamily. In terms of assembly, interacts with uS11. Not a structural component of 40S pre-ribosomes, but transiently interacts with them by binding to uS11.

The enzyme catalyses AMP + ATP = 2 ADP. It carries out the reaction ATP + H2O = ADP + phosphate + H(+). In terms of biological role, broad-specificity nucleoside monophosphate (NMP) kinase that catalyzes the reversible transfer of the terminal phosphate group between nucleoside triphosphates and monophosphates. Also has ATPase activity. Involved in the late maturation steps of the 30S ribosomal particles, specifically 16S rRNA maturation. While NMP activity is not required for ribosome maturation, ATPase activity is. Associates transiently with small ribosomal subunit protein uS11. ATP hydrolysis breaks the interaction with uS11. May temporarily remove uS11 from the ribosome to enable a conformational change of the ribosomal RNA that is needed for the final maturation step of the small ribosomal subunit. This Methanothermobacter thermautotrophicus (strain ATCC 29096 / DSM 1053 / JCM 10044 / NBRC 100330 / Delta H) (Methanobacterium thermoautotrophicum) protein is Putative adenylate kinase.